A 401-amino-acid chain; its full sequence is tRNA(Met) cytidine acetate ligase (401 aa).

Residues 7–20 (IVEYNPFHNGHLYH), glycine 102, asparagine 164, and arginine 189 each bind ATP.

Belongs to the TmcAL family.

The protein localises to the cytoplasm. It catalyses the reaction cytidine(34) in elongator tRNA(Met) + acetate + ATP = N(4)-acetylcytidine(34) in elongator tRNA(Met) + AMP + diphosphate. Catalyzes the formation of N(4)-acetylcytidine (ac(4)C) at the wobble position of elongator tRNA(Met), using acetate and ATP as substrates. First activates an acetate ion to form acetyladenylate (Ac-AMP) and then transfers the acetyl group to tRNA to form ac(4)C34. The chain is tRNA(Met) cytidine acetate ligase from Thermoanaerobacter pseudethanolicus (strain ATCC 33223 / 39E) (Clostridium thermohydrosulfuricum).